The primary structure comprises 185 residues: Large ribosomal subunit protein uL6 (185 aa).

It belongs to the universal ribosomal protein uL6 family. Part of the 50S ribosomal subunit.

Functionally, this protein binds to the 23S rRNA, and is important in its secondary structure. It is located near the subunit interface in the base of the L7/L12 stalk, and near the tRNA binding site of the peptidyltransferase center. This is Large ribosomal subunit protein uL6 from Staphylothermus marinus (strain ATCC 43588 / DSM 3639 / JCM 9404 / F1).